A 419-amino-acid chain; its full sequence is Gamma-glutamyl phosphate reductase (419 aa).

This sequence belongs to the gamma-glutamyl phosphate reductase family.

It is found in the cytoplasm. It catalyses the reaction L-glutamate 5-semialdehyde + phosphate + NADP(+) = L-glutamyl 5-phosphate + NADPH + H(+). It functions in the pathway amino-acid biosynthesis; L-proline biosynthesis; L-glutamate 5-semialdehyde from L-glutamate: step 2/2. Catalyzes the NADPH-dependent reduction of L-glutamate 5-phosphate into L-glutamate 5-semialdehyde and phosphate. The product spontaneously undergoes cyclization to form 1-pyrroline-5-carboxylate. The polypeptide is Gamma-glutamyl phosphate reductase (Yersinia enterocolitica serotype O:8 / biotype 1B (strain NCTC 13174 / 8081)).